The sequence spans 291 residues: Pca regulon regulatory protein (291 aa).

The interval 1–22 (MSDETLVNDPVNPEPARPASAA) is disordered. One can recognise an HTH iclR-type domain in the interval 45-105 (MTSLARGLAV…SDGRTYSLLP (61 aa)). Residues 67–86 (IAQISHRTEIPRAAVRRCLH) constitute a DNA-binding region (H-T-H motif). Residues 120-291 (LAISAQPYLD…SRDLCHQLFG (172 aa)) enclose the IclR-ED domain.

Functionally, positive regulator of all genes within the pca regulon, pcaBDC, pcaIJ and pcaF. Also required for the chemotactic response to aromatic compounds. The protein is Pca regulon regulatory protein (pcaR) of Pseudomonas putida (Arthrobacter siderocapsulatus).